Reading from the N-terminus, the 162-residue chain is Cyanate hydratase (162 aa).

Residues arginine 90, glutamate 93, and serine 116 contribute to the active site.

Belongs to the cyanase family.

The catalysed reaction is cyanate + hydrogencarbonate + 3 H(+) = NH4(+) + 2 CO2. Functionally, catalyzes the reaction of cyanate with bicarbonate to produce ammonia and carbon dioxide. The polypeptide is Cyanate hydratase (Populus trichocarpa (Western balsam poplar)).